A 188-amino-acid chain; its full sequence is Inosine triphosphate pyrophosphatase (188 aa).

12 to 17 contacts ITP; the sequence is TGNKNK. E40 is a binding site for Mg(2+). ITP contacts are provided by residues K52, 68-69, K85, 144-147, K165, and 170-171; these read DT, FGWD, and HR.

It belongs to the HAM1 NTPase family. Homodimer. Requires Mg(2+) as cofactor. It depends on Mn(2+) as a cofactor.

Its subcellular location is the cytoplasm. It is found in the nucleus. It carries out the reaction ITP + H2O = IMP + diphosphate + H(+). It catalyses the reaction dITP + H2O = dIMP + diphosphate + H(+). The enzyme catalyses XTP + H2O = XMP + diphosphate + H(+). Pyrophosphatase that hydrolyzes non-canonical purine nucleotides such as inosine triphosphate (ITP), deoxyinosine triphosphate (dITP) or xanthosine 5'-triphosphate (XTP) to their respective monophosphate derivatives. The enzyme does not distinguish between the deoxy- and ribose forms. Probably excludes non-canonical purines from RNA and DNA precursor pools, thus preventing their incorporation into RNA and DNA and avoiding chromosomal lesions. The chain is Inosine triphosphate pyrophosphatase from Phaeosphaeria nodorum (strain SN15 / ATCC MYA-4574 / FGSC 10173) (Glume blotch fungus).